The chain runs to 444 residues: Protein kinase C and casein kinase substrate in neurons protein 1 (444 aa).

A phosphoserine mark is found at Ser2 and Ser79. Positions 13 to 283 (EETTDSFWEV…AIRGADAQDD (271 aa)) constitute an F-BAR domain. A coiled-coil region spans residues 26–275 (KRTVKRIDDG…QVYRELEQAI (250 aa)). The residue at position 184 (Thr184) is a Phosphothreonine. The tract at residues 313–384 (AAKKEKQPKK…NGGSNPFDED (72 aa)) is disordered. Residues 314 to 324 (AKKEKQPKKAE) show a composition bias toward basic and acidic residues. Residues 336 to 358 (ESTSQAGDRGSVSSYDRGQTYAT) show a composition bias toward polar residues. Phosphoserine is present on residues Ser346, Ser348, Ser349, Ser361, and Ser365. Residues 385 to 444 (AKGVRVRALYDYDGQEQDELSFKAGDELTKLGEEDEQGWCRGRLDSGQLGLYPANYVEVV) enclose the SH3 domain. Tyr394 bears the Phosphotyrosine mark. A phosphoserine mark is found at Ser405 and Ser430.

The protein belongs to the PACSIN family. As to quaternary structure, homodimer. May form heterooligomers with other PACSINs. Interacts with MAPT. Interacts (via SH3 domain) with SYNJ1 and WASL. Interacts (via SH3 domain) with DNM1; the interaction is reduced by DNM1 phosphorylation. Interacts with DNM2 and DNM3. Interacts with both COBL and DBNL. Identified in a complex composed of COBL, PACSIN1 and WASL. Interacts with EHD1 and EHD3. Interacts with TRPV4. Post-translationally, phosphorylated by casein kinase 2 (CK2) and protein kinase C (PKC).

The protein resides in the cytoplasm. It localises to the cell projection. Its subcellular location is the synapse. It is found in the synaptosome. The protein localises to the ruffle membrane. The protein resides in the membrane. It localises to the cytoplasmic vesicle membrane. Its subcellular location is the cytosol. It is found in the cell membrane. Its function is as follows. Binds to membranes via its F-BAR domain and mediates membrane tubulation. Plays a role in the reorganization of the microtubule cytoskeleton via its interaction with MAPT; this decreases microtubule stability and inhibits MAPT-induced microtubule polymerization. Plays a role in cellular transport processes by recruiting DNM1, DNM2 and DNM3 to membranes. Plays a role in the reorganization of the actin cytoskeleton and in neuron morphogenesis via its interaction with COBL and WASL, and by recruiting COBL to the cell cortex. Plays a role in the regulation of neurite formation, neurite branching and the regulation of neurite length. Required for normal synaptic vesicle endocytosis; this process retrieves previously released neurotransmitters to accommodate multiple cycles of neurotransmission. Required for normal excitatory and inhibitory synaptic transmission. The sequence is that of Protein kinase C and casein kinase substrate in neurons protein 1 (PACSIN1) from Bos taurus (Bovine).